The chain runs to 572 residues: RNA polymerase sigma factor sigB (572 aa).

Residues 1-39 (MSSCLLPQFKCPPDSFSIHFRTSFCAPKHNKGSVFFQPQ) constitute a chloroplast transit peptide. The interval 215–249 (TRQTERKARRAKGLEKTASGIPSVKTGSSPKKKRL) is disordered. The short motif at 360–373 (DLVQEGCRGLVRGA) is the Polymerase core binding element. Positions 530–549 (LQEIGEMMGVSRERVRQIES) form a DNA-binding region, H-T-H motif.

The protein belongs to the sigma-70 factor family. As to expression, highly expressed in cotyledons, to a lesser extent in leaves, sepals and siliques, and barely expressed in roots. Present in seedlings.

The protein localises to the plastid. It is found in the chloroplast. In terms of biological role, required for the transition of plastids into chloroplasts by coordinating nuclear and chloroplastic genomes under light conditions. Sigma factors are initiation factors that promote the attachment of plastid-encoded RNA polymerase (PEP) to specific initiation sites and are then released. Promotes the biosynthesis of plastid-encoded tRNAs (e.g. trnE-UUC and trnV-UAC). This chain is RNA polymerase sigma factor sigB (SIGB), found in Arabidopsis thaliana (Mouse-ear cress).